The following is a 471-amino-acid chain: UDP-N-acetylmuramate--L-alanine ligase (471 aa).

112 to 118 (GTHGKTT) is an ATP binding site.

The protein belongs to the MurCDEF family.

The protein localises to the cytoplasm. It catalyses the reaction UDP-N-acetyl-alpha-D-muramate + L-alanine + ATP = UDP-N-acetyl-alpha-D-muramoyl-L-alanine + ADP + phosphate + H(+). It functions in the pathway cell wall biogenesis; peptidoglycan biosynthesis. In terms of biological role, cell wall formation. In Cupriavidus metallidurans (strain ATCC 43123 / DSM 2839 / NBRC 102507 / CH34) (Ralstonia metallidurans), this protein is UDP-N-acetylmuramate--L-alanine ligase.